The following is a 508-amino-acid chain: Histidine ammonia-lyase (508 aa).

A cross-link (5-imidazolinone (Ala-Gly)) is located at residues 143–145; it reads ASG. S144 bears the 2,3-didehydroalanine (Ser) mark.

This sequence belongs to the PAL/histidase family. In terms of processing, contains an active site 4-methylidene-imidazol-5-one (MIO), which is formed autocatalytically by cyclization and dehydration of residues Ala-Ser-Gly.

Its subcellular location is the cytoplasm. The enzyme catalyses L-histidine = trans-urocanate + NH4(+). The protein operates within amino-acid degradation; L-histidine degradation into L-glutamate; N-formimidoyl-L-glutamate from L-histidine: step 1/3. The polypeptide is Histidine ammonia-lyase (Caldanaerobacter subterraneus subsp. tengcongensis (strain DSM 15242 / JCM 11007 / NBRC 100824 / MB4) (Thermoanaerobacter tengcongensis)).